A 315-amino-acid chain; its full sequence is Ribosomal RNA small subunit methyltransferase H (315 aa).

S-adenosyl-L-methionine contacts are provided by residues 35–37 (GGH), Asp55, Phe80, Asp102, and Gln109.

The protein belongs to the methyltransferase superfamily. RsmH family.

The protein localises to the cytoplasm. The catalysed reaction is cytidine(1402) in 16S rRNA + S-adenosyl-L-methionine = N(4)-methylcytidine(1402) in 16S rRNA + S-adenosyl-L-homocysteine + H(+). In terms of biological role, specifically methylates the N4 position of cytidine in position 1402 (C1402) of 16S rRNA. The chain is Ribosomal RNA small subunit methyltransferase H from Shewanella halifaxensis (strain HAW-EB4).